The following is a 936-amino-acid chain: Coiled-coil domain-containing protein 191 (936 aa).

2 coiled-coil regions span residues 189-270 (RLTM…VKAA) and 364-440 (RDYT…LQAA). The disordered stretch occupies residues 495–541 (LGRTTTGNLQGSLQNVSLSAPGNKQHKTLGAEPSQQPGSNETLRTTS). Polar residues-rich tracts occupy residues 497–516 (RTTT…SAPG) and 527–541 (PSQQ…RTTS). Positions 554–592 (NRHVFQQQLIEKQKKKLQEQQKTILELKKNLQLAEAQWA) form a coiled coil. Disordered stretches follow at residues 607-656 (LSKP…TPHP) and 691-714 (KAQE…RKRE). The stretch at 662–739 (EERAIQRAEC…IKRNQQLEAI (78 aa)) forms a coiled coil.

This is Coiled-coil domain-containing protein 191 (CCDC191) from Homo sapiens (Human).